The primary structure comprises 320 residues: 3-ketodihydrosphingosine reductase TSC10 (320 aa).

The Cytoplasmic portion of the chain corresponds to 1–254 (MKFTLEDQVV…IIAKSLARGD (254 aa)). L11 is a binding site for NADP(+). NADPH is bound by residues G14, S16, and G18. Residues 14 to 18 (GGSQG) carry the GXSXG motif. L19 is a binding site for NADP(+). The NADPH site is built by R41, R45, D89, and L90. D89 is an NADP(+) binding site. The active-site Proton donor is the S166. NADP(+) is bound by residues Y180, K184, and S213. The Proton acceptor role is filled by Y180. Residue K184 is the Lowers pKa of active site Tyr of the active site. Residues 255–275 (DDVFTDFVGWMIMGMDLGLTA) traverse the membrane as a helical segment. Residues 276 to 279 (KKSR) lie on the Lumenal side of the membrane. A helical membrane pass occupies residues 280-300 (FVPLQWIFGVLSNILVVPFYM). Over 301 to 320 (VGCSWYIRKWFRENDGKKAN) the chain is Cytoplasmic.

This sequence belongs to the short-chain dehydrogenases/reductases (SDR) family. As to quaternary structure, dimer or tetramer.

The protein resides in the endoplasmic reticulum membrane. It carries out the reaction sphinganine + NADP(+) = 3-oxosphinganine + NADPH + H(+). It participates in lipid metabolism; sphingolipid metabolism. Its function is as follows. Catalyzes the reduction of 3'-oxosphinganine (3-ketodihydrosphingosine/KDS) to sphinganine (dihydrosphingosine/DHS), the second step of de novo sphingolipid biosynthesis. The polypeptide is 3-ketodihydrosphingosine reductase TSC10 (Saccharomyces cerevisiae (strain ATCC 204508 / S288c) (Baker's yeast)).